We begin with the raw amino-acid sequence, 175 residues long: 3-hydroxydecanoyl-[acyl-carrier-protein] dehydratase (175 aa).

His74 is an active-site residue.

The protein belongs to the thioester dehydratase family. FabA subfamily. As to quaternary structure, homodimer.

It is found in the cytoplasm. The catalysed reaction is a (3R)-hydroxyacyl-[ACP] = a (2E)-enoyl-[ACP] + H2O. It carries out the reaction (3R)-hydroxydecanoyl-[ACP] = (2E)-decenoyl-[ACP] + H2O. The enzyme catalyses (2E)-decenoyl-[ACP] = (3Z)-decenoyl-[ACP]. Its pathway is lipid metabolism; fatty acid biosynthesis. Functionally, necessary for the introduction of cis unsaturation into fatty acids. Catalyzes the dehydration of (3R)-3-hydroxydecanoyl-ACP to E-(2)-decenoyl-ACP and then its isomerization to Z-(3)-decenoyl-ACP. Can catalyze the dehydratase reaction for beta-hydroxyacyl-ACPs with saturated chain lengths up to 16:0, being most active on intermediate chain length. This Alcanivorax borkumensis (strain ATCC 700651 / DSM 11573 / NCIMB 13689 / SK2) protein is 3-hydroxydecanoyl-[acyl-carrier-protein] dehydratase.